Here is a 120-residue protein sequence, read N- to C-terminus: Ribosome-binding factor A (120 aa).

Belongs to the RbfA family. As to quaternary structure, monomer. Binds 30S ribosomal subunits, but not 50S ribosomal subunits or 70S ribosomes.

Its subcellular location is the cytoplasm. Its function is as follows. One of several proteins that assist in the late maturation steps of the functional core of the 30S ribosomal subunit. Associates with free 30S ribosomal subunits (but not with 30S subunits that are part of 70S ribosomes or polysomes). Required for efficient processing of 16S rRNA. May interact with the 5'-terminal helix region of 16S rRNA. This is Ribosome-binding factor A from Limosilactobacillus fermentum (strain NBRC 3956 / LMG 18251) (Lactobacillus fermentum).